The following is a 293-amino-acid chain: Acetylglutamate kinase (293 aa).

Residues 67 to 68 (GG), Arg89, and Asn190 each bind substrate.

This sequence belongs to the acetylglutamate kinase family. ArgB subfamily.

Its subcellular location is the cytoplasm. It carries out the reaction N-acetyl-L-glutamate + ATP = N-acetyl-L-glutamyl 5-phosphate + ADP. The protein operates within amino-acid biosynthesis; L-arginine biosynthesis; N(2)-acetyl-L-ornithine from L-glutamate: step 2/4. Its function is as follows. Catalyzes the ATP-dependent phosphorylation of N-acetyl-L-glutamate. This is Acetylglutamate kinase from Nitrosospira multiformis (strain ATCC 25196 / NCIMB 11849 / C 71).